The sequence spans 210 residues: Urease accessory protein UreG (210 aa).

14–21 contributes to the GTP binding site; the sequence is GPVGSGKT.

This sequence belongs to the SIMIBI class G3E GTPase family. UreG subfamily. Homodimer. UreD, UreF and UreG form a complex that acts as a GTP-hydrolysis-dependent molecular chaperone, activating the urease apoprotein by helping to assemble the nickel containing metallocenter of UreC. The UreE protein probably delivers the nickel.

It is found in the cytoplasm. Functionally, facilitates the functional incorporation of the urease nickel metallocenter. This process requires GTP hydrolysis, probably effectuated by UreG. The chain is Urease accessory protein UreG from Rhodopseudomonas palustris (strain BisB5).